Reading from the N-terminus, the 354-residue chain is Ion-translocating oxidoreductase complex subunit D (354 aa).

3 helical membrane-spanning segments follow: residues 9-28, 67-87, and 117-137; these read IMLH…LYLF, LLSG…WIAV, and VALL…LPLG. At Thr165 the chain carries FMN phosphoryl threonine. 5 helical membrane-spanning segments follow: residues 200 to 220, 222 to 242, 249 to 269, 277 to 297, and 301 to 321; these read GSLG…LLAL, IIHW…AALA, VHGG…ALFI, PISR…VFVI, and GNFP…VPLI.

This sequence belongs to the NqrB/RnfD family. As to quaternary structure, the complex is composed of six subunits: RnfA, RnfB, RnfC, RnfD, RnfE and RnfG. FMN is required as a cofactor.

The protein localises to the cell inner membrane. Its function is as follows. Part of a membrane-bound complex that couples electron transfer with translocation of ions across the membrane. The chain is Ion-translocating oxidoreductase complex subunit D from Stutzerimonas stutzeri (Pseudomonas stutzeri).